A 228-amino-acid chain; its full sequence is Urease accessory protein UreE (228 aa).

The tract at residues 193-228 (HGSGLHIHGIHSHGDGHSHSHDDHDHDHNHDHDHKH) is disordered. The segment covering 204–228 (SHGDGHSHSHDDHDHDHNHDHDHKH) has biased composition (basic and acidic residues).

This sequence belongs to the UreE family.

It is found in the cytoplasm. In terms of biological role, involved in urease metallocenter assembly. Binds nickel. Probably functions as a nickel donor during metallocenter assembly. In Yersinia rohdei, this protein is Urease accessory protein UreE.